The primary structure comprises 37 residues: MKVRASVKKICRNCKVIKRHGVVRVICVEPKHKQRQG.

Belongs to the bacterial ribosomal protein bL36 family.

In Psychromonas ingrahamii (strain DSM 17664 / CCUG 51855 / 37), this protein is Large ribosomal subunit protein bL36.